The sequence spans 206 residues: Guanylate kinase (206 aa).

Residues 5-183 (FNLLILSGPS…SKEIILSIAK (179 aa)) enclose the Guanylate kinase-like domain. ATP is bound at residue 12 to 19 (GPSGAGKS).

It belongs to the guanylate kinase family.

The protein localises to the cytoplasm. The catalysed reaction is GMP + ATP = GDP + ADP. In terms of biological role, essential for recycling GMP and indirectly, cGMP. The polypeptide is Guanylate kinase (gmk) (Helicobacter pylori (strain ATCC 700392 / 26695) (Campylobacter pylori)).